A 349-amino-acid chain; its full sequence is Transcription initiation factor TFIID subunit 7 (349 aa).

The short motif at 3–5 is the [KR]-[STA]-K motif element; sequence KSK. Residues 105-126 form a disordered region; it reads PPVEEPVASTDPKASKKKDKDK. Serine 171, serine 200, serine 201, and serine 213 each carry phosphoserine. The disordered stretch occupies residues 186–212; the sequence is EDETKEAENQGLDISSPGMSGHRQGHD. Residues 227-247 are disordered; the sequence is SSSSEDEDETQHQDEEDINII. A compositionally biased stretch (acidic residues) spans 230 to 247; it reads SEDEDETQHQDEEDINII. Positions 244 to 349 form a coiled coil; that stretch reads INIIDTEEDL…QEELESLLEK (106 aa). Phosphoserine is present on serine 264. Positions 328 to 349 are disordered; that stretch reads KEDREKEQLSSLQEELESLLEK.

The protein belongs to the TAF7 family. As to quaternary structure, component of the TFIID basal transcription factor complex, composed of TATA-box-binding protein TBP, and a number of TBP-associated factors (TAFs), including TAF1, TAF2, TAF3, TAF4, TAF5, TAF6, TAF7, TAF8, TAF9, TAF10, TAF11, TAF12 and TAF13. Part of a TFIID-containing RNA polymerase II pre-initiation complex that is composed of TBP and at least GTF2A1, GTF2A2, GTF2E1, GTF2E2, GTF2F1, GTF2H2, GTF2H3, GTF2H4, GTF2H5, GTF2B, TCEA1, ERCC2, ERCC3, TAF1, TAF2, TAF3, TAF4, TAF5, TAF6, TAF7, TAF8, TAF9, TAF10, TAF11, TAF12 and TAF13. Interacts with TAF1; the interaction is direct. Interacts with TAF1, TAF5, TAF11, TAF12, and TAF13, but not with TAF10 or TBP. Component of some MLL1/MLL complex, at least composed of the core components KMT2A/MLL1, ASH2L, HCFC1/HCF1, WDR5 and RBBP5, as well as the facultative components BACC1, CHD8, E2F6, HSP70, INO80C, KANSL1, LAS1L, MAX, MCRS1, MGA, MYST1/MOF, PELP1, PHF20, PRP31, RING2, RUVB1/TIP49A, RUVB2/TIP49B, SENP3, TAF1, TAF4, TAF6, TAF7, TAF9 and TEX10. Interacts with CIITA and TAF1 and inhibits their acetyltransferase activity, and behaving as a repressor of CIITA- and TAF1-regulated promoters. Phosphorylated by CIITA. Phosphorylation at Ser-264 by TAF1 in early G1 phase disrupts binding to TAF1. In terms of processing, ubiquitinated by TRIM26; leading to proteasomal degradation. As to expression, ubiquitous.

Its subcellular location is the nucleus. The TFIID basal transcription factor complex plays a major role in the initiation of RNA polymerase II (Pol II)-dependent transcription. TFIID recognizes and binds promoters with or without a TATA box via its subunit TBP, a TATA-box-binding protein, and promotes assembly of the pre-initiation complex (PIC). The TFIID complex consists of TBP and TBP-associated factors (TAFs), including TAF1, TAF2, TAF3, TAF4, TAF5, TAF6, TAF7, TAF8, TAF9, TAF10, TAF11, TAF12 and TAF13. TAF7 forms a promoter DNA binding subcomplex of TFIID, together with TAF1 and TAF2. Part of a TFIID complex containing TAF10 (TFIID alpha) and a TFIID complex lacking TAF10 (TFIID beta). The protein is Transcription initiation factor TFIID subunit 7 (TAF7) of Homo sapiens (Human).